A 505-amino-acid polypeptide reads, in one-letter code: Flagellin (505 aa).

This sequence belongs to the bacterial flagellin family.

The protein localises to the secreted. It is found in the bacterial flagellum. Its function is as follows. Flagellin is the subunit protein which polymerizes to form the filaments of bacterial flagella. The sequence is that of Flagellin (fliC) from Salmonella muenchen.